A 479-amino-acid chain; its full sequence is Ribulose bisphosphate carboxylase large chain (479 aa).

The propeptide occupies 1–2 (MS). Residue Pro-3 is modified to N-acetylproline. Substrate contacts are provided by Asn-123 and Thr-173. The active-site Proton acceptor is Lys-175. Lys-177 is a substrate binding site. Mg(2+) contacts are provided by Lys-201, Asp-203, and Glu-204. N6-carboxylysine is present on Lys-201. The Proton acceptor role is filled by His-294. Positions 295, 327, and 379 each coordinate substrate.

This sequence belongs to the RuBisCO large chain family. Type I subfamily. As to quaternary structure, heterohexadecamer of 8 large chains and 8 small chains; disulfide-linked. The disulfide link is formed within the large subunit homodimers. Mg(2+) serves as cofactor. Post-translationally, the disulfide bond which can form in the large chain dimeric partners within the hexadecamer appears to be associated with oxidative stress and protein turnover.

It localises to the plastid. Its subcellular location is the chloroplast. It catalyses the reaction 2 (2R)-3-phosphoglycerate + 2 H(+) = D-ribulose 1,5-bisphosphate + CO2 + H2O. The catalysed reaction is D-ribulose 1,5-bisphosphate + O2 = 2-phosphoglycolate + (2R)-3-phosphoglycerate + 2 H(+). Functionally, ruBisCO catalyzes two reactions: the carboxylation of D-ribulose 1,5-bisphosphate, the primary event in carbon dioxide fixation, as well as the oxidative fragmentation of the pentose substrate in the photorespiration process. Both reactions occur simultaneously and in competition at the same active site. The sequence is that of Ribulose bisphosphate carboxylase large chain from Hordeum vulgare (Barley).